Reading from the N-terminus, the 365-residue chain is uncharacterized protein (365 aa).

Residues 45 to 289 (FSIGKSLTII…LKEVKKSNPK (245 aa)) enclose the Radical SAM core domain. [4Fe-4S] cluster contacts are provided by cysteine 60, cysteine 68, and cysteine 71.

It depends on [4Fe-4S] cluster as a cofactor.

This is an uncharacterized protein from Methanocaldococcus jannaschii (strain ATCC 43067 / DSM 2661 / JAL-1 / JCM 10045 / NBRC 100440) (Methanococcus jannaschii).